Reading from the N-terminus, the 117-residue chain is S-adenosylmethionine decarboxylase proenzyme (117 aa).

Serine 63 acts as the Schiff-base intermediate with substrate; via pyruvic acid in catalysis. Serine 63 carries the pyruvic acid (Ser); by autocatalysis modification. Histidine 68 serves as the catalytic Proton acceptor; for processing activity. Residue cysteine 83 is the Proton donor; for catalytic activity of the active site.

This sequence belongs to the prokaryotic AdoMetDC family. Type 1 subfamily. In terms of assembly, heterotetramer of two alpha and two beta chains arranged as a dimer of alpha/beta heterodimers. The cofactor is pyruvate. In terms of processing, is synthesized initially as an inactive proenzyme. Formation of the active enzyme involves a self-maturation process in which the active site pyruvoyl group is generated from an internal serine residue via an autocatalytic post-translational modification. Two non-identical subunits are generated from the proenzyme in this reaction, and the pyruvate is formed at the N-terminus of the alpha chain, which is derived from the carboxyl end of the proenzyme. The post-translation cleavage follows an unusual pathway, termed non-hydrolytic serinolysis, in which the side chain hydroxyl group of the serine supplies its oxygen atom to form the C-terminus of the beta chain, while the remainder of the serine residue undergoes an oxidative deamination to produce ammonia and the pyruvoyl group blocking the N-terminus of the alpha chain.

It catalyses the reaction S-adenosyl-L-methionine + H(+) = S-adenosyl 3-(methylsulfanyl)propylamine + CO2. Its pathway is amine and polyamine biosynthesis; S-adenosylmethioninamine biosynthesis; S-adenosylmethioninamine from S-adenosyl-L-methionine: step 1/1. In terms of biological role, catalyzes the decarboxylation of S-adenosylmethionine to S-adenosylmethioninamine (dcAdoMet), the propylamine donor required for the synthesis of the polyamines spermine and spermidine from the diamine putrescine. The polypeptide is S-adenosylmethionine decarboxylase proenzyme (Methanococcus aeolicus (strain ATCC BAA-1280 / DSM 17508 / OCM 812 / Nankai-3)).